Reading from the N-terminus, the 118-residue chain is Large ribosomal subunit protein uL18 (118 aa).

It belongs to the universal ribosomal protein uL18 family. Part of the 50S ribosomal subunit; part of the 5S rRNA/L5/L18/L25 subcomplex. Contacts the 5S and 23S rRNAs.

Functionally, this is one of the proteins that bind and probably mediate the attachment of the 5S RNA into the large ribosomal subunit, where it forms part of the central protuberance. This chain is Large ribosomal subunit protein uL18, found in Myxococcus xanthus (strain DK1622).